We begin with the raw amino-acid sequence, 256 residues long: Phosphoribosylaminoimidazole-succinocarboxamide synthase (256 aa).

The protein belongs to the SAICAR synthetase family.

It catalyses the reaction 5-amino-1-(5-phospho-D-ribosyl)imidazole-4-carboxylate + L-aspartate + ATP = (2S)-2-[5-amino-1-(5-phospho-beta-D-ribosyl)imidazole-4-carboxamido]succinate + ADP + phosphate + 2 H(+). It participates in purine metabolism; IMP biosynthesis via de novo pathway; 5-amino-1-(5-phospho-D-ribosyl)imidazole-4-carboxamide from 5-amino-1-(5-phospho-D-ribosyl)imidazole-4-carboxylate: step 1/2. This is Phosphoribosylaminoimidazole-succinocarboxamide synthase from Synechococcus sp. (strain JA-3-3Ab) (Cyanobacteria bacterium Yellowstone A-Prime).